Here is a 98-residue protein sequence, read N- to C-terminus: NADH-ubiquinone oxidoreductase chain 4L (98 aa).

3 helical membrane-spanning segments follow: residues 2–22 (PPIF…TLIF), 29–49 (SLLC…LIIL), and 61–81 (ILLL…LVMV).

Belongs to the complex I subunit 4L family. As to quaternary structure, core subunit of respiratory chain NADH dehydrogenase (Complex I) which is composed of 45 different subunits.

Its subcellular location is the mitochondrion inner membrane. The catalysed reaction is a ubiquinone + NADH + 5 H(+)(in) = a ubiquinol + NAD(+) + 4 H(+)(out). Functionally, core subunit of the mitochondrial membrane respiratory chain NADH dehydrogenase (Complex I) which catalyzes electron transfer from NADH through the respiratory chain, using ubiquinone as an electron acceptor. Part of the enzyme membrane arm which is embedded in the lipid bilayer and involved in proton translocation. This chain is NADH-ubiquinone oxidoreductase chain 4L (MT-ND4L), found in Avahi unicolor (Sambirano woolly lemur).